The following is a 932-amino-acid chain: Glycine dehydrogenase (decarboxylating) (932 aa).

Lys685 is modified (N6-(pyridoxal phosphate)lysine).

It belongs to the GcvP family. In terms of assembly, the glycine cleavage system is composed of four proteins: P, T, L and H. Pyridoxal 5'-phosphate is required as a cofactor.

It catalyses the reaction N(6)-[(R)-lipoyl]-L-lysyl-[glycine-cleavage complex H protein] + glycine + H(+) = N(6)-[(R)-S(8)-aminomethyldihydrolipoyl]-L-lysyl-[glycine-cleavage complex H protein] + CO2. Functionally, the glycine cleavage system catalyzes the degradation of glycine. The P protein binds the alpha-amino group of glycine through its pyridoxal phosphate cofactor; CO(2) is released and the remaining methylamine moiety is then transferred to the lipoamide cofactor of the H protein. In Brucella melitensis biotype 1 (strain ATCC 23456 / CCUG 17765 / NCTC 10094 / 16M), this protein is Glycine dehydrogenase (decarboxylating).